The sequence spans 373 residues: 3 beta-hydroxysteroid dehydrogenase/Delta 5--&gt;4-isomerase type 1 (373 aa).

NADP(+) is bound by residues 10–15 (GAGGFL), Tyr-155, and Lys-159. Lys-159 acts as the Proton donor in catalysis. A helical transmembrane segment spans residues 288–308 (VALLYWLGFLLELVSFLLRPV).

It belongs to the 3-beta-HSD family. In terms of tissue distribution, high levels in adrenal gland, kidney and male liver. Low levels in female liver.

It is found in the endoplasmic reticulum membrane. It localises to the mitochondrion membrane. It catalyses the reaction a 3beta-hydroxy-Delta(5)-steroid + NAD(+) = a 3-oxo-Delta(5)-steroid + NADH + H(+). The catalysed reaction is pregnenolone + NAD(+) = pregn-5-ene-3,20-dione + NADH + H(+). It carries out the reaction 3beta-hydroxyandrost-5-en-17-one + NAD(+) = androst-5-ene-3,17-dione + NADH + H(+). The enzyme catalyses androst-5-en-3beta,17beta-diol + NAD(+) = 17beta-hydroxy-androst-5-en-3-one + NADH + H(+). It catalyses the reaction a 3beta-hydroxysteroid + NADP(+) = a 3-oxosteroid + NADPH + H(+). The catalysed reaction is 5alpha-androstane-3beta,17beta-diol + NADP(+) = 17beta-hydroxy-5alpha-androstan-3-one + NADPH + H(+). It carries out the reaction 3beta-hydroxy-5alpha-androstan-17-one + NADP(+) = 5alpha-androstan-3,17-dione + NADPH + H(+). The enzyme catalyses a 3-oxo-Delta(5)-steroid = a 3-oxo-Delta(4)-steroid. It catalyses the reaction pregn-5-ene-3,20-dione = progesterone. The catalysed reaction is androst-5-ene-3,17-dione = androst-4-ene-3,17-dione. It carries out the reaction 17beta-hydroxy-androst-5-en-3-one = testosterone. The enzyme catalyses 5alpha-androstane-3beta,17beta-diol + NAD(+) = 17beta-hydroxy-5alpha-androstan-3-one + NADH + H(+). Its pathway is steroid hormone biosynthesis. It functions in the pathway steroid metabolism. Functionally, a bifunctional enzyme responsible for the oxidation and isomerization of 3beta-hydroxy-Delta(5)-steroid precursors to 3-oxo-Delta(4)-steroids, an essential step in steroid hormone biosynthesis. Specifically catalyzes the conversion of pregnenolone to progesterone, 17alpha-hydroxypregnenolone to 17alpha-hydroxyprogesterone, dehydroepiandrosterone (DHEA) to 4-androstenedione, and androstenediol to testosterone. Additionally, catalyzes the interconversion between 3beta-hydroxy and 3-oxo-5alpha-androstane steroids controlling the bioavalability of the active forms. Specifically converts dihydrotestosterone to its inactive form 5alpha-androstanediol, that does not bind androgen receptor/AR. Also converts androstanedione, a precursor of testosterone and estrone, to epiandrosterone. Expected to use NAD(+) as preferred electron donor for the 3-beta-hydroxy-steroid dehydrogenase activity and NADPH for the 3-ketosteroid reductase activity. The sequence is that of 3 beta-hydroxysteroid dehydrogenase/Delta 5--&gt;4-isomerase type 1 (HSD3B1) from Mesocricetus auratus (Golden hamster).